Reading from the N-terminus, the 656-residue chain is Probable serine/threonine-protein kinase sky1 (656 aa).

Residues 1–127 (MSDIQQDSTS…KQGGYHPVRR (127 aa)) are disordered. Positions 16–48 (TSLGGTSLGGTSLGGTSLGGTSLGGTSLGGTSL) are enriched in gly residues. 2 stretches are compositionally biased toward low complexity: residues 49 to 64 (GGST…STNS) and 72 to 89 (TSSN…NNNE). The segment covering 96-108 (AGSSNKSFMPLNN) has biased composition (polar residues). The Protein kinase domain occupies 135–648 (YQVVDKLGWG…AKDCLNHTWL (514 aa)). ATP is bound at residue 141 to 149 (LGWGHFSTV). A disordered region spans residues 157–185 (TPITTSSSSSSTTTTTTSSSSNGNGNGNG). The segment covering 160–179 (TTSSSSSSTTTTTTSSSSNG) has biased composition (low complexity). Residue Lys197 participates in ATP binding. The active-site Proton acceptor is the Asp298. The interval 330-454 (RTSSSNKQSQ…TTATATATTT (125 aa)) is disordered. Positions 332 to 355 (SSSNKQSQQQQQPQQQQSQQNIND) are enriched in low complexity. Composition is skewed to basic and acidic residues over residues 383-401 (SNRD…DDNK) and 413-440 (ENTD…KEEP). Residues 441-454 (TTTTTTATATATTT) are compositionally biased toward low complexity.

Belongs to the protein kinase superfamily. CMGC Ser/Thr protein kinase family.

It catalyses the reaction L-seryl-[protein] + ATP = O-phospho-L-seryl-[protein] + ADP + H(+). It carries out the reaction L-threonyl-[protein] + ATP = O-phospho-L-threonyl-[protein] + ADP + H(+). This chain is Probable serine/threonine-protein kinase sky1 (sky1), found in Dictyostelium discoideum (Social amoeba).